The primary structure comprises 38 residues: Large ribosomal subunit protein bL36 (38 aa).

The protein belongs to the bacterial ribosomal protein bL36 family.

This chain is Large ribosomal subunit protein bL36, found in Azotobacter vinelandii (strain DJ / ATCC BAA-1303).